The following is a 400-amino-acid chain: S-adenosylmethionine synthase (400 aa).

ATP is bound at residue 136–141 (GQGSVD).

It belongs to the AdoMet synthase 2 family. The cofactor is Mg(2+).

It carries out the reaction L-methionine + ATP + H2O = S-adenosyl-L-methionine + phosphate + diphosphate. Its pathway is amino-acid biosynthesis; S-adenosyl-L-methionine biosynthesis; S-adenosyl-L-methionine from L-methionine: step 1/1. Its function is as follows. Catalyzes the formation of S-adenosylmethionine from methionine and ATP. The protein is S-adenosylmethionine synthase of Thermoplasma volcanium (strain ATCC 51530 / DSM 4299 / JCM 9571 / NBRC 15438 / GSS1).